Reading from the N-terminus, the 164-residue chain is MENYQGQHGYGADRVDVYGNPVGAGQYGGGATAPGGGHGAMGMGGHAGAGAGGQFQPAREDRKTGGILHRSGSSSSSSSSEDDGMGGRRKKGIKEKIKEKLPGGNKGNNQQQQQMMGNTGGAYGQQGHAGMTGAGTGVHGAEYGNAGEKKGFMDKIKEKLPGQH.

The segment at 1–164 (MENYQGQHGY…KIKEKLPGQH (164 aa)) is disordered. Residues 25-53 (GQYGGGATAPGGGHGAMGMGGHAGAGAGG) are compositionally biased toward gly residues. Over residues 107-117 (GNNQQQQQMMG) the composition is skewed to low complexity. Residues 147 to 164 (GEKKGFMDKIKEKLPGQH) are compositionally biased toward basic and acidic residues.

It belongs to the plant dehydrin family.

This chain is Dehydrin Rab16B (RAB16B), found in Oryza sativa subsp. indica (Rice).